A 46-amino-acid chain; its full sequence is Photosystem II reaction center protein K (46 aa).

A propeptide spanning residues Met-1–Ala-9 is cleaved from the precursor. Residues Leu-25–Phe-45 traverse the membrane as a helical segment.

The protein belongs to the PsbK family. As to quaternary structure, PSII is composed of 1 copy each of membrane proteins PsbA, PsbB, PsbC, PsbD, PsbE, PsbF, PsbH, PsbI, PsbJ, PsbK, PsbL, PsbM, PsbT, PsbX, PsbY, PsbZ, Psb30/Ycf12, at least 3 peripheral proteins of the oxygen-evolving complex and a large number of cofactors. It forms dimeric complexes.

The protein localises to the plastid. The protein resides in the chloroplast thylakoid membrane. Its function is as follows. One of the components of the core complex of photosystem II (PSII). PSII is a light-driven water:plastoquinone oxidoreductase that uses light energy to abstract electrons from H(2)O, generating O(2) and a proton gradient subsequently used for ATP formation. It consists of a core antenna complex that captures photons, and an electron transfer chain that converts photonic excitation into a charge separation. The chain is Photosystem II reaction center protein K from Nephroselmis olivacea (Green alga).